Here is a 475-residue protein sequence, read N- to C-terminus: MATASTAATFRPSSVSASSELTHLRSPSKLPKFTPLPSARSRSSSSFSVSCTIAKDPAVVMADSEKIKAAGSDPTMWQRPDSFGRFGKFGGKYVPETLMHALSELETAFYSLATDEDFQRELAEILKDYVGRESPLYFAERLTEHYRRENGEGPLIYLKREDLNHTGAHKINNAVAQALLAKRLGKKRIIAETGAGQHGVATATVCARFGLQCIIYMGAQDMERQALNVFRMRLLGAEVRGVHSGTATLKDATSEAIRDWVTNVETTHYILGSVAGPHPYPMMVRDFHAVIGKETRKQAMEKWGGKPDVLVACVGGGSNAMGLFHEFVDDTEVRMIGVEAAGFGLDSGKHAATLTKGDVGVLHGAMSYLLQDDDGQIIEPHSISAGLDYPGVGPEHSFLKDVGRAEYFSVTDEEALEAFKRVSRLEGIIPALETSHALAHLEKLCPTLPDGARVVLNFSGRGDKDVQTAIKYLEV.

Polar residues predominate over residues 1–21; that stretch reads MATASTAATFRPSSVSASSEL. The segment at 1 to 44 is disordered; the sequence is MATASTAATFRPSSVSASSELTHLRSPSKLPKFTPLPSARSRSS. The transit peptide at 1–51 directs the protein to the chloroplast; it reads MATASTAATFRPSSVSASSELTHLRSPSKLPKFTPLPSARSRSSSSFSVSC. Thr52 bears the N-acetylthreonine mark. N6-(pyridoxal phosphate)lysine is present on Lys170.

The protein belongs to the TrpB family. In terms of assembly, tetramer of two alpha and two beta chains. It depends on pyridoxal 5'-phosphate as a cofactor.

Its subcellular location is the plastid. It is found in the chloroplast. The enzyme catalyses (1S,2R)-1-C-(indol-3-yl)glycerol 3-phosphate + L-serine = D-glyceraldehyde 3-phosphate + L-tryptophan + H2O. The protein operates within amino-acid biosynthesis; L-tryptophan biosynthesis; L-tryptophan from chorismate: step 5/5. Functionally, the beta subunit is responsible for the synthesis of L-tryptophan from indole and L-serine. This chain is Tryptophan synthase beta chain 2, chloroplastic (TSB2), found in Arabidopsis thaliana (Mouse-ear cress).